A 258-amino-acid polypeptide reads, in one-letter code: UPF0246 protein Sden_2729 (258 aa).

Belongs to the UPF0246 family.

This Shewanella denitrificans (strain OS217 / ATCC BAA-1090 / DSM 15013) protein is UPF0246 protein Sden_2729.